Here is a 721-residue protein sequence, read N- to C-terminus: Teichoic acid poly(glycerol phosphate) polymerase (721 aa).

Residues 443 to 447 (WHGTP), arginine 511, 545 to 546 (PT), 582 to 584 (RMH), 624 to 625 (SS), and aspartate 629 contribute to the CDP-glycerol site.

The protein belongs to the CDP-glycerol glycerophosphotransferase family.

The protein localises to the cell membrane. The enzyme catalyses 4-O-[(2R)-glycerylphospho]-N-acetyl-beta-D-mannosaminyl-(1-&gt;4)-N-acetyl-alpha-D-glucosaminyl di-trans,octa-cis-undecaprenyl diphosphate + n CDP-glycerol = 4-O-{[(2R)-1-glycerylphospho](n)-(2R)-1-glycerylphospho}-N-acetyl-beta-D-mannosaminyl-(1-&gt;4)-N-acetyl-alpha-D-glucosaminyl undecaprenyl diphosphate + n CMP + n H(+). It participates in cell wall biogenesis; poly(glycerol phosphate) teichoic acid biosynthesis. Its function is as follows. Responsible for the polymerization of the main chain of the major teichoic acid by sequential transfer of glycerol phosphate units from CDP-glycerol to the disaccharide linkage unit. Synthesizes polymers of approximately 35 glycerol phosphate units in length. This chain is Teichoic acid poly(glycerol phosphate) polymerase, found in Staphylococcus epidermidis (strain ATCC 35984 / DSM 28319 / BCRC 17069 / CCUG 31568 / BM 3577 / RP62A).